We begin with the raw amino-acid sequence, 239 residues long: MSKAQTLSAADRAKLEGLIGHDFAEKERLDRALTHASARTEKGGNYERLEFLGDRVLGLCIAELLFRTFGTAGEGELSVRLNQLVSAETCAAVADELNLHLYIRTGADVKKLTGKRMMNVRADVVESLIAAIYLDGGLEVARRFILRYWQGRAVRADGAKRDAKTELQEWSHAKFGVTPNYRVDERSGPDHDPRFKVTVEVAGIKPETGVERSKRAAEQVAATKMLEREGIWQQSPAGN.

Positions 12-137 (RAKLEGLIGH…LIAAIYLDGG (126 aa)) constitute an RNase III domain. Glutamate 50 lines the Mg(2+) pocket. Aspartate 54 is an active-site residue. Mg(2+) contacts are provided by aspartate 123 and glutamate 126. Glutamate 126 is a catalytic residue. Residues 162 to 231 (DAKTELQEWS…ATKMLEREGI (70 aa)) enclose the DRBM domain.

The protein belongs to the ribonuclease III family. As to quaternary structure, homodimer. It depends on Mg(2+) as a cofactor.

The protein localises to the cytoplasm. It catalyses the reaction Endonucleolytic cleavage to 5'-phosphomonoester.. Functionally, digests double-stranded RNA. Involved in the processing of primary rRNA transcript to yield the immediate precursors to the large and small rRNAs (23S and 16S). Processes some mRNAs, and tRNAs when they are encoded in the rRNA operon. Processes pre-crRNA and tracrRNA of type II CRISPR loci if present in the organism. This Rhizobium leguminosarum bv. trifolii (strain WSM2304) protein is Ribonuclease 3.